A 329-amino-acid polypeptide reads, in one-letter code: MKISILGAGAWGTALALQISRRHQVSLWTRNQAHIVDMQVTRANLQYLGDFAFGDQLAVEGDLGRALDGADLIVSVVPTNGFRNALKEIKRLGCDAPVVWASKGLEAATAKLPHEVAQDELGDSRHWGVLSGPSFAAELVRGLPTAVTLAANDAEFAARAGAMLHGGNFRVYTSTDVIGVSVGGALKNVLAIAAGISDGMQCGNNARAALITRGIAEMTRFGVALGGAKETFMGLTGAGDLILTCTGQYSRNREVGLRLANGQTLQEILKTLGHVAEGVHTAREVVKRAGQLGVEMPITQEVDQVLSHGRSPRQAMENLLSREQKSEAL.

Residues tryptophan 11, arginine 30, and lysine 103 each coordinate NADPH. Positions 103, 132, and 134 each coordinate sn-glycerol 3-phosphate. Alanine 136 is a binding site for NADPH. Residues lysine 187, aspartate 240, serine 250, arginine 251, and asparagine 252 each coordinate sn-glycerol 3-phosphate. Lysine 187 (proton acceptor) is an active-site residue. Arginine 251 is a binding site for NADPH. 2 residues coordinate NADPH: valine 275 and glutamate 277.

This sequence belongs to the NAD-dependent glycerol-3-phosphate dehydrogenase family.

It is found in the cytoplasm. The enzyme catalyses sn-glycerol 3-phosphate + NAD(+) = dihydroxyacetone phosphate + NADH + H(+). It catalyses the reaction sn-glycerol 3-phosphate + NADP(+) = dihydroxyacetone phosphate + NADPH + H(+). It functions in the pathway membrane lipid metabolism; glycerophospholipid metabolism. In terms of biological role, catalyzes the reduction of the glycolytic intermediate dihydroxyacetone phosphate (DHAP) to sn-glycerol 3-phosphate (G3P), the key precursor for phospholipid synthesis. The protein is Glycerol-3-phosphate dehydrogenase [NAD(P)+] of Methylobacillus flagellatus (strain ATCC 51484 / DSM 6875 / VKM B-1610 / KT).